A 340-amino-acid polypeptide reads, in one-letter code: Phenylalanine--tRNA ligase alpha subunit (340 aa).

Glutamate 258 contacts Mg(2+).

The protein belongs to the class-II aminoacyl-tRNA synthetase family. Phe-tRNA synthetase alpha subunit type 1 subfamily. As to quaternary structure, tetramer of two alpha and two beta subunits. Mg(2+) is required as a cofactor.

It localises to the cytoplasm. The enzyme catalyses tRNA(Phe) + L-phenylalanine + ATP = L-phenylalanyl-tRNA(Phe) + AMP + diphosphate + H(+). This is Phenylalanine--tRNA ligase alpha subunit from Corynebacterium glutamicum (strain ATCC 13032 / DSM 20300 / JCM 1318 / BCRC 11384 / CCUG 27702 / LMG 3730 / NBRC 12168 / NCIMB 10025 / NRRL B-2784 / 534).